We begin with the raw amino-acid sequence, 274 residues long: uncharacterized protein (274 aa).

An N-terminal signal peptide occupies residues 1-30 (MTVYTPTSERQAPATTHRQMWALGDYAAIA).

To M.tuberculosis Rv1405c.

This is an uncharacterized protein from Mycobacterium tuberculosis (strain CDC 1551 / Oshkosh).